A 265-amino-acid polypeptide reads, in one-letter code: UPF0354 protein GWCH70_2742 (265 aa).

The protein belongs to the UPF0354 family.

This chain is UPF0354 protein GWCH70_2742, found in Geobacillus sp. (strain WCH70).